The sequence spans 562 residues: Urocanate hydratase (562 aa).

NAD(+) is bound by residues 52–53 (GG), glutamine 130, 176–178 (GMG), glutamate 196, arginine 201, 242–243 (NA), 263–267 (QTSAH), 273–274 (YL), and tyrosine 322. The active site involves cysteine 410. Glycine 492 contributes to the NAD(+) binding site.

This sequence belongs to the urocanase family. Requires NAD(+) as cofactor.

The protein localises to the cytoplasm. The catalysed reaction is 4-imidazolone-5-propanoate = trans-urocanate + H2O. Its pathway is amino-acid degradation; L-histidine degradation into L-glutamate; N-formimidoyl-L-glutamate from L-histidine: step 2/3. Its function is as follows. Catalyzes the conversion of urocanate to 4-imidazolone-5-propionate. This is Urocanate hydratase from Shewanella pealeana (strain ATCC 700345 / ANG-SQ1).